The following is a 160-amino-acid chain: Protein cornichon homolog 3 (160 aa).

The Cytoplasmic segment spans residues 1-10; that stretch reads MAFTFAAFCY. Residues 11 to 31 form a helical membrane-spanning segment; that stretch reads MLSLVLCAALIFFAIWHIIAF. Topologically, residues 32-72 are lumenal; it reads DELRTDFKSPIDQCNPVHARERLRNIERICFLLRKLVLPEY. A helical transmembrane segment spans residues 73-93; it reads SIHSLFCVMFLCAQEWLTLGL. Topologically, residues 94 to 138 are cytoplasmic; that stretch reads NVPLLFYHFWRYFHCPADSSELAYDPPVVMNADTLSYCQKEAWCK. The helical transmembrane segment at 139–159 threads the bilayer; the sequence is LAFYLLSFFYYLYCMIYTLVS. S160 is a topological domain (lumenal).

The protein belongs to the cornichon family. As to quaternary structure, acts as an auxiliary subunit for AMPA-selective glutamate receptors (AMPARs). Found in a complex with GRIA1, GRIA2, GRIA3, GRIA4, CNIH2, CACNG2, CACNG3, CACNG4, CACNG5, CACNG7 and CACNG8. In terms of tissue distribution, brain. Expressed in the neocortex, hippocampal formation, and cerebellum (at protein level).

It localises to the postsynaptic cell membrane. In terms of biological role, regulates the trafficking and gating properties of AMPA-selective glutamate receptors (AMPARs). Promotes their targeting to the cell membrane and synapses and modulates their gating properties by regulating their rates of activation, deactivation and desensitization. The chain is Protein cornichon homolog 3 (Cnih3) from Rattus norvegicus (Rat).